Here is a 227-residue protein sequence, read N- to C-terminus: Ribonuclease 3 (227 aa).

The RNase III domain occupies 3 to 130 (TNAISKIIKY…LIGAIYLDGG (128 aa)). Glutamate 43 contacts Mg(2+). The active site involves aspartate 47. 2 residues coordinate Mg(2+): asparagine 116 and glutamate 119. Glutamate 119 is an active-site residue. A DRBM domain is found at 155–224 (DAKTILQEWA…ASLMLAKINY (70 aa)).

The protein belongs to the ribonuclease III family. In terms of assembly, homodimer. Mg(2+) is required as a cofactor.

It localises to the cytoplasm. The catalysed reaction is Endonucleolytic cleavage to 5'-phosphomonoester.. In terms of biological role, digests double-stranded RNA. Involved in the processing of primary rRNA transcript to yield the immediate precursors to the large and small rRNAs (23S and 16S). Processes some mRNAs, and tRNAs when they are encoded in the rRNA operon. Processes pre-crRNA and tracrRNA of type II CRISPR loci if present in the organism. This Ehrlichia ruminantium (strain Welgevonden) protein is Ribonuclease 3.